The sequence spans 438 residues: Flotillin-2 (438 aa).

This sequence belongs to the band 7/mec-2 family. Flotillin subfamily. In terms of assembly, heterooligomeric complex of flotillins 1 and 2.

It localises to the membrane. In terms of biological role, may play a role in axon growth and regeneration. May be involved in epidermal cell adhesion and epidermal structure and function. This chain is Flotillin-2, found in Drosophila melanogaster (Fruit fly).